The sequence spans 316 residues: Coproporphyrin III ferrochelatase (316 aa).

Residues Tyr13, Arg30, 46-47 (RY), Ser54, and Tyr125 each bind Fe-coproporphyrin III. Fe(2+) is bound by residues His183 and Glu264.

Belongs to the ferrochelatase family.

It is found in the cytoplasm. The enzyme catalyses Fe-coproporphyrin III + 2 H(+) = coproporphyrin III + Fe(2+). The protein operates within porphyrin-containing compound metabolism; protoheme biosynthesis. Its function is as follows. Involved in coproporphyrin-dependent heme b biosynthesis. Catalyzes the insertion of ferrous iron into coproporphyrin III to form Fe-coproporphyrin III. This Geobacillus kaustophilus (strain HTA426) protein is Coproporphyrin III ferrochelatase.